The chain runs to 245 residues: Carboxymethylenebutenolidase homolog (245 aa).

Ala2 carries the N-acetylalanine modification. Active-site residues include Cys132, Asp179, and His212. At Ser223 the chain carries Phosphoserine.

The protein belongs to the dienelactone hydrolase family.

The protein localises to the cytoplasm. The protein resides in the cytosol. In terms of biological role, cysteine hydrolase. The protein is Carboxymethylenebutenolidase homolog (Cmbl) of Mus musculus (Mouse).